Reading from the N-terminus, the 553-residue chain is Tether containing UBX domain for GLUT4 (553 aa).

N-acetylalanine is present on A2. The span at 182 to 202 shows a compositional bias: low complexity; sequence PGSLGSSASAGQAAASAPLPL. Positions 182-324 are disordered; that stretch reads PGSLGSSASA…REPVDREPVV (143 aa). S184 is subject to Phosphoserine. The span at 206 to 217 shows a compositional bias: basic and acidic residues; the sequence is ELSRGDLSRPED. Residues 260–280 are compositionally biased toward low complexity; it reads RPLTSSSAKLPKSLSSPGGPS. S275 is subject to Phosphoserine. A compositionally biased stretch (basic and acidic residues) spans 296-324; that stretch reads EQERERDPQQEQERERPVDREPVDREPVV. Residues 317 to 380 are interaction with GLUT4; it reads PVDREPVVCH…LVTKAFREAQ (64 aa). The region spanning 386-462 is the UBX domain; it reads ERYPKVALRV…NLFPAALVHL (77 aa). A disordered region spans residues 499–536; it reads GSPSPLPAPDPAPKSEPAAEEGALVPPEPIPGTAQPVK. 2 positions are modified to phosphoserine: S500 and S502. Residues 502–512 are compositionally biased toward pro residues; the sequence is SPLPAPDPAPK.

In terms of assembly, interacts with GLUT4. Interacts with VCPKMT. Interacts with VCP. Ubiquitous. Highly expressed in testis, heart, skeletal muscle and pancreas.

It localises to the endomembrane system. The protein localises to the endoplasmic reticulum-Golgi intermediate compartment membrane. The protein resides in the cytoplasm. Its subcellular location is the nucleus. Its function is as follows. Tethering protein that sequesters GLUT4-containing vesicles in the cytoplasm in the absence of insulin. Modulates the amount of GLUT4 that is available at the cell surface. Enhances VCP methylation catalyzed by VCPKMT. The polypeptide is Tether containing UBX domain for GLUT4 (ASPSCR1) (Homo sapiens (Human)).